The following is a 228-amino-acid chain: Heptaprenylglyceryl phosphate synthase (228 aa).

Sn-glycerol 1-phosphate is bound at residue lysine 12. Aspartate 14 and serine 40 together coordinate Mg(2+). Residues 158–163, glycine 188, and 208–209 each bind sn-glycerol 1-phosphate; these read YLEYSG and GN.

The protein belongs to the GGGP/HepGP synthase family. Group I subfamily. In terms of assembly, homodimer. Mg(2+) is required as a cofactor.

The enzyme catalyses sn-glycerol 1-phosphate + all-trans-heptaprenyl diphosphate = 3-heptaprenyl-sn-glycero-1-phosphate + diphosphate. Its pathway is membrane lipid metabolism; glycerophospholipid metabolism. In terms of biological role, prenyltransferase that catalyzes in vivo the transfer of the heptaprenyl moiety of heptaprenyl pyrophosphate (HepPP; 35 carbon atoms) to the C3 hydroxyl of sn-glycerol-1-phosphate (G1P), producing heptaprenylglyceryl phosphate (HepGP). This reaction is an ether-bond-formation step in the biosynthesis of archaea-type G1P-based membrane lipids found in Bacillales. To a much lesser extent, is also able to use geranyl diphosphate (GPP; C10) and geranylgeranyl diphosphate (GGPP; C20) as the prenyl donors, but not farnesyl pyrophosphate (FPP; C15). Cannot use glycerol-3-phosphate (G3P) or 3-phosphoglycerate (3PG) as an acceptor. The chain is Heptaprenylglyceryl phosphate synthase from Bacillus subtilis (strain 168).